We begin with the raw amino-acid sequence, 295 residues long: 4-hydroxy-tetrahydrodipicolinate synthase (295 aa).

T46 is a pyruvate binding site. Y134 acts as the Proton donor/acceptor in catalysis. Catalysis depends on K162, which acts as the Schiff-base intermediate with substrate. Residue I205 coordinates pyruvate.

The protein belongs to the DapA family. As to quaternary structure, homotetramer; dimer of dimers.

It is found in the cytoplasm. It catalyses the reaction L-aspartate 4-semialdehyde + pyruvate = (2S,4S)-4-hydroxy-2,3,4,5-tetrahydrodipicolinate + H2O + H(+). The protein operates within amino-acid biosynthesis; L-lysine biosynthesis via DAP pathway; (S)-tetrahydrodipicolinate from L-aspartate: step 3/4. Functionally, catalyzes the condensation of (S)-aspartate-beta-semialdehyde [(S)-ASA] and pyruvate to 4-hydroxy-tetrahydrodipicolinate (HTPA). The polypeptide is 4-hydroxy-tetrahydrodipicolinate synthase (Anaeromyxobacter dehalogenans (strain 2CP-C)).